A 115-amino-acid chain; its full sequence is DNA-binding protein Ta0052 (115 aa).

The segment at 1–41 (MDDDEELERIRRQQLESMQRQAMQEQMREEQEKQREAERAR) is disordered. The span at 15 to 25 (LESMQRQAMQE) shows a compositional bias: low complexity. The segment covering 26–41 (QMREEQEKQREAERAR) has biased composition (basic and acidic residues).

It belongs to the PDCD5 family.

This Thermoplasma acidophilum (strain ATCC 25905 / DSM 1728 / JCM 9062 / NBRC 15155 / AMRC-C165) protein is DNA-binding protein Ta0052.